A 91-amino-acid chain; its full sequence is Small ribosomal subunit protein bS20 (91 aa).

Residues 1-23 (MANTSSAKKATRKIARRTEVNKA) are disordered.

Belongs to the bacterial ribosomal protein bS20 family.

In terms of biological role, binds directly to 16S ribosomal RNA. The sequence is that of Small ribosomal subunit protein bS20 from Rhizobium rhizogenes (strain K84 / ATCC BAA-868) (Agrobacterium radiobacter).